The chain runs to 306 residues: MKNCTLGNETDNSLISNAFGFLRFPLNFQPYSSDADWVITGVPFDMATSGRAGTRHGPGAIRQISTNLAWEGHRWPWHFDMRERLKVVDCGDLVFNFGDAQDMSDKLQAHTEKLLAAGKRCLTFGGDHFVTLPLLRAHAKHFGKMALVHFDAHTDTYANGSKFDHGTMFYHAPNEGLIDPQHSVQIGIRTEHDTNNGFTVLDAAQVNDRGVDDLVAQIKEIVGSLPVYLTFDIDCLDPAFAPGTGTPVVGGLTTDKALKMLRALQPLNIVGMDLVEVSPAYDQSDITALAGATIALDMLYLQAAKK.

Mn(2+) contacts are provided by His-128, Asp-151, His-153, Asp-155, Asp-232, and Asp-234.

Belongs to the arginase family. Agmatinase subfamily. Mn(2+) serves as cofactor.

The enzyme catalyses agmatine + H2O = urea + putrescine. Its pathway is amine and polyamine biosynthesis; putrescine biosynthesis via agmatine pathway; putrescine from agmatine: step 1/1. Functionally, catalyzes the formation of putrescine from agmatine. This chain is Agmatinase (speB), found in Proteus mirabilis.